A 423-amino-acid chain; its full sequence is UPF0229 protein Pput_0430 (423 aa).

The tract at residues 81–108 (EFTAGEHIPRPQGGGGGGGRGKAGNSGE) is disordered. A compositionally biased stretch (gly residues) spans 92–107 (QGGGGGGGRGKAGNSG).

The protein belongs to the UPF0229 family.

This chain is UPF0229 protein Pput_0430, found in Pseudomonas putida (strain ATCC 700007 / DSM 6899 / JCM 31910 / BCRC 17059 / LMG 24140 / F1).